Consider the following 187-residue polypeptide: Adenylate kinase (187 aa).

Residue 10 to 15 (GSGKGT) coordinates ATP. An NMP region spans residues 30 to 59 (STGDLLRSEVVAGTPLGLQAKQVMAQGDLV). AMP-binding positions include T31, R36, 57-59 (DLV), 85-88 (GYPR), and Q92. The interval 126–136 (GRAQAEGREDD) is LID. R127 contacts ATP. The AMP site is built by R133 and R144. G172 provides a ligand contact to ATP.

This sequence belongs to the adenylate kinase family. Monomer.

It localises to the cytoplasm. It catalyses the reaction AMP + ATP = 2 ADP. The protein operates within purine metabolism; AMP biosynthesis via salvage pathway; AMP from ADP: step 1/1. Its function is as follows. Catalyzes the reversible transfer of the terminal phosphate group between ATP and AMP. Plays an important role in cellular energy homeostasis and in adenine nucleotide metabolism. The polypeptide is Adenylate kinase (Xylella fastidiosa (strain M23)).